The following is a 418-amino-acid chain: 3-phosphoshikimate 1-carboxyvinyltransferase (418 aa).

Positions 26, 27, and 31 each coordinate 3-phosphoshikimate. Lys26 serves as a coordination point for phosphoenolpyruvate. Phosphoenolpyruvate contacts are provided by Gly97 and Arg125. Ser170, Ser171, Gln172, Asp297, Asn320, and Lys324 together coordinate 3-phosphoshikimate. Gln172 contributes to the phosphoenolpyruvate binding site. Asp297 functions as the Proton acceptor in the catalytic mechanism. Residues Arg328, Arg375, and Lys400 each contribute to the phosphoenolpyruvate site.

It belongs to the EPSP synthase family. As to quaternary structure, monomer.

It is found in the cytoplasm. The catalysed reaction is 3-phosphoshikimate + phosphoenolpyruvate = 5-O-(1-carboxyvinyl)-3-phosphoshikimate + phosphate. It participates in metabolic intermediate biosynthesis; chorismate biosynthesis; chorismate from D-erythrose 4-phosphate and phosphoenolpyruvate: step 6/7. Catalyzes the transfer of the enolpyruvyl moiety of phosphoenolpyruvate (PEP) to the 5-hydroxyl of shikimate-3-phosphate (S3P) to produce enolpyruvyl shikimate-3-phosphate and inorganic phosphate. The chain is 3-phosphoshikimate 1-carboxyvinyltransferase from Pseudomonas syringae pv. syringae (strain B728a).